The chain runs to 615 residues: Dihydroxy-acid dehydratase (615 aa).

Position 81 (Asp-81) interacts with Mg(2+). Cys-122 provides a ligand contact to [2Fe-2S] cluster. The Mg(2+) site is built by Asp-123 and Lys-124. An N6-carboxylysine modification is found at Lys-124. Cys-195 contributes to the [2Fe-2S] cluster binding site. Residue Glu-491 participates in Mg(2+) binding. The active-site Proton acceptor is Ser-517.

This sequence belongs to the IlvD/Edd family. In terms of assembly, homodimer. [2Fe-2S] cluster serves as cofactor. Requires Mg(2+) as cofactor.

The catalysed reaction is (2R)-2,3-dihydroxy-3-methylbutanoate = 3-methyl-2-oxobutanoate + H2O. It catalyses the reaction (2R,3R)-2,3-dihydroxy-3-methylpentanoate = (S)-3-methyl-2-oxopentanoate + H2O. It functions in the pathway amino-acid biosynthesis; L-isoleucine biosynthesis; L-isoleucine from 2-oxobutanoate: step 3/4. The protein operates within amino-acid biosynthesis; L-valine biosynthesis; L-valine from pyruvate: step 3/4. Functions in the biosynthesis of branched-chain amino acids. Catalyzes the dehydration of (2R,3R)-2,3-dihydroxy-3-methylpentanoate (2,3-dihydroxy-3-methylvalerate) into 2-oxo-3-methylpentanoate (2-oxo-3-methylvalerate) and of (2R)-2,3-dihydroxy-3-methylbutanoate (2,3-dihydroxyisovalerate) into 2-oxo-3-methylbutanoate (2-oxoisovalerate), the penultimate precursor to L-isoleucine and L-valine, respectively. This Shewanella halifaxensis (strain HAW-EB4) protein is Dihydroxy-acid dehydratase.